The chain runs to 289 residues: Phosphatidylserine decarboxylase proenzyme (289 aa).

Catalysis depends on charge relay system; for autoendoproteolytic cleavage activity residues D89, H146, and S252. The active-site Schiff-base intermediate with substrate; via pyruvic acid; for decarboxylase activity is the S252. S252 carries the pyruvic acid (Ser); by autocatalysis modification.

Belongs to the phosphatidylserine decarboxylase family. PSD-B subfamily. Prokaryotic type I sub-subfamily. As to quaternary structure, heterodimer of a large membrane-associated beta subunit and a small pyruvoyl-containing alpha subunit. It depends on pyruvate as a cofactor. Post-translationally, is synthesized initially as an inactive proenzyme. Formation of the active enzyme involves a self-maturation process in which the active site pyruvoyl group is generated from an internal serine residue via an autocatalytic post-translational modification. Two non-identical subunits are generated from the proenzyme in this reaction, and the pyruvate is formed at the N-terminus of the alpha chain, which is derived from the carboxyl end of the proenzyme. The autoendoproteolytic cleavage occurs by a canonical serine protease mechanism, in which the side chain hydroxyl group of the serine supplies its oxygen atom to form the C-terminus of the beta chain, while the remainder of the serine residue undergoes an oxidative deamination to produce ammonia and the pyruvoyl prosthetic group on the alpha chain. During this reaction, the Ser that is part of the protease active site of the proenzyme becomes the pyruvoyl prosthetic group, which constitutes an essential element of the active site of the mature decarboxylase.

It localises to the cell membrane. The enzyme catalyses a 1,2-diacyl-sn-glycero-3-phospho-L-serine + H(+) = a 1,2-diacyl-sn-glycero-3-phosphoethanolamine + CO2. The protein operates within phospholipid metabolism; phosphatidylethanolamine biosynthesis; phosphatidylethanolamine from CDP-diacylglycerol: step 2/2. In terms of biological role, catalyzes the formation of phosphatidylethanolamine (PtdEtn) from phosphatidylserine (PtdSer). This chain is Phosphatidylserine decarboxylase proenzyme, found in Shewanella sp. (strain W3-18-1).